A 208-amino-acid chain; its full sequence is Probable GTP-binding protein EngB (208 aa).

Positions 22–195 (GLPEIALAGR…WHSIEEIFIA (174 aa)) constitute an EngB-type G domain. Residues 30–37 (GRSNVGKS), 57–61 (GKTRT), 75–78 (DLPG), 142–145 (TKSD), and 174–176 (ISS) each bind GTP. Ser37 and Thr59 together coordinate Mg(2+).

Belongs to the TRAFAC class TrmE-Era-EngA-EngB-Septin-like GTPase superfamily. EngB GTPase family. The cofactor is Mg(2+).

Its function is as follows. Necessary for normal cell division and for the maintenance of normal septation. The polypeptide is Probable GTP-binding protein EngB (Alkaliphilus oremlandii (strain OhILAs) (Clostridium oremlandii (strain OhILAs))).